The sequence spans 846 residues: Interleukin cytokine receptor-related protein 1 (846 aa).

A signal peptide spans 1–25 (MFLHSPALLIWLFLFCLAGPQAVRT). Residues 26-418 (EPYNSTSSSS…KEDTTWTWHT (393 aa)) are Extracellular-facing. N-linked (GlcNAc...) asparagine glycans are attached at residues Asn29, Asn79, Asn186, Asn214, Asn339, and Asn395. Residues 388–409 (EKPPATSNQTEESDGKAEKDKK) form a disordered region. The span at 400–409 (SDGKAEKDKK) shows a compositional bias: basic and acidic residues. Residues 419-439 (YAITGGAIIAILFILSVCAGL) traverse the membrane as a helical segment. Topologically, residues 440 to 846 (KCYKKFNNKK…AFHDEVIGIH (407 aa)) are cytoplasmic. One can recognise an SEFIR domain in the interval 476-618 (SISVLIVYSH…IPNSLMTMTT (143 aa)). The segment at 737–771 (GPIHVEPTEPEVLEPAEEPMEEAEEDEEDEDDVDS) is disordered. The segment covering 744–771 (TEPEVLEPAEEPMEEAEEDEEDEDDVDS) has biased composition (acidic residues).

In terms of assembly, component of a heterodimeric receptor complex composed of ilcr-1 and ilcr-2. The receptor complex interacts with actl-1 and ilc-17.1 with the interaction being mediated by ilcr-2. As to expression, expressed in most neurons.

The protein localises to the cell membrane. Forms a receptor complex together with receptor ilcr-2, which upon activation acts as a modulator of neuronal activity. Binding of the ligand ilc-17.1 to the ilcr-1/2 receptor complex triggers a signaling cascade that activates the downstream signaling components actl-1, pik-1 and nfki-1, and results in increased neuronal activity in RMG interneurons in response to input from oxygen-sensing neurons. This leads to increased animal movement and promotes aggregation behavior. The chain is Interleukin cytokine receptor-related protein 1 from Caenorhabditis elegans.